Consider the following 295-residue polypeptide: 33 kDa chaperonin (295 aa).

2 disulfides stabilise this stretch: Cys-233/Cys-235 and Cys-267/Cys-270.

Belongs to the HSP33 family. Under oxidizing conditions two disulfide bonds are formed involving the reactive cysteines. Under reducing conditions zinc is bound to the reactive cysteines and the protein is inactive.

The protein localises to the cytoplasm. Redox regulated molecular chaperone. Protects both thermally unfolding and oxidatively damaged proteins from irreversible aggregation. Plays an important role in the bacterial defense system toward oxidative stress. This chain is 33 kDa chaperonin, found in Mannheimia succiniciproducens (strain KCTC 0769BP / MBEL55E).